The following is a 94-amino-acid chain: Large ribosomal subunit protein uL23 (94 aa).

It belongs to the universal ribosomal protein uL23 family. As to quaternary structure, part of the 50S ribosomal subunit. Contacts protein L29, and trigger factor when it is bound to the ribosome.

Functionally, one of the early assembly proteins it binds 23S rRNA. One of the proteins that surrounds the polypeptide exit tunnel on the outside of the ribosome. Forms the main docking site for trigger factor binding to the ribosome. The chain is Large ribosomal subunit protein uL23 from Pelobacter propionicus (strain DSM 2379 / NBRC 103807 / OttBd1).